Here is a 656-residue protein sequence, read N- to C-terminus: MTKPLLEVSACYRSFQAGEQQLTVLKDINLSIARGEMVAIVGASGSGKSTLMNILGCLDKPSKGAYFIDGQDTSQMDVDELAKLRREHFGFIFQRYHLLGDLNAVGNVEVPAVYAGKDRLERRDRAESLLSRLGLGERLDHKPNQLSGGQQQRVSVARALMNGGDVILADEPTGALDSHSGEEMMRLLQELHREGHTIIIVTHDMHVAQHADRIIEIKDGVIISDEPNLASQTAVKAQVDMSLAKPSGATRVAAWDRYAEALKMALLAMSTHRLRTFLTMLGIIIGIASVVSVVALGEGSQREILKSISSMGTNTIDIRPGLGFGDRRSARVRTLTASDANALKNLPYVDSVTPSISSSVTVRLGNKAVTASVNGVGPEFFRVRGYELAQGQFWDDDSVDALAQDAVIDDNTRKQLFPDSTGAMGSVIGQVIFLGDLPVRIIGVTKPKESAFGNSDALNVWVPYTTVSGRMVGKKYLDGITVRLDESVPSNAAEQGIITLLKMRHGTQDFFTINTDTIRQNIEKTTATMTLLISAIAVISLVVGGIGVMNIMLVSVTERTREIGVRMAVGARQSDILRQFLIEAVLVCLCGGALGVALAYLIGVVFAQAGGSFQMIYSTTSIVAAFACSTLIGVLFGFLPARNAARLDPVEALARE.

The 239-residue stretch at 6-244 (LEVSACYRSF…VKAQVDMSLA (239 aa)) folds into the ABC transporter domain. 42–49 (GASGSGKS) is an ATP binding site. Helical transmembrane passes span 277-297 (FLTM…VALG), 531-551 (LLIS…VMNI), 586-606 (LVCL…GVVF), and 621-641 (SIVA…FLPA).

Belongs to the ABC transporter superfamily. Macrolide exporter (TC 3.A.1.122) family. As to quaternary structure, homodimer. Part of the tripartite efflux system MacAB-TolC, which is composed of an inner membrane transporter, MacB, a periplasmic membrane fusion protein, MacA, and an outer membrane component, TolC. The complex forms a large protein conduit and can translocate molecules across both the inner and outer membranes. Interacts with MacA.

The protein resides in the cell inner membrane. In terms of biological role, part of the tripartite efflux system MacAB-TolC. MacB is a non-canonical ABC transporter that contains transmembrane domains (TMD), which form a pore in the inner membrane, and an ATP-binding domain (NBD), which is responsible for energy generation. Confers resistance against macrolides. The chain is Macrolide export ATP-binding/permease protein MacB from Shewanella oneidensis (strain ATCC 700550 / JCM 31522 / CIP 106686 / LMG 19005 / NCIMB 14063 / MR-1).